The sequence spans 472 residues: MALFIVTVSELTDYIAEKFEKDDWLNQVAVEGELSNCKFSQGHLYFTLKDERAELKGVMYKGRASALPFIPQDGQKVIVFGQVAVYKKRGIYQIYAEMIEPLGIGALYLKFEQTKEKLRDKGYFAEERKKKLPRYPEKIGIVTSKNGAAIRDILTTIKKRWPKATLYLVPVAVQGDEAPGQIVKALNLLNRYKLCEVIILARGGGSFEELAAFNEETVADAIYASNIPVVTGIGHETDTSIADMVADRRAPTPTGAAVEATPNLVEIWNNLREQRQKMVKALANYFQREQKNLEFQERRILRAYEKLITDKSREVTEGLERLLRSFKTTFQQEKNRLSLLKEKLILLSPYLRHKQQKEKLEELKERLFLRCAELLKRNQAVLIQQSLRLRTSVKNLVLQKNLVLSSYEERLKLLNPLKILNRGYAVVFDFEGRVVTSVNNLPERFKIKFSDGEALAKALGKNIIEGDKNDDL.

Belongs to the XseA family. As to quaternary structure, heterooligomer composed of large and small subunits.

Its subcellular location is the cytoplasm. It carries out the reaction Exonucleolytic cleavage in either 5'- to 3'- or 3'- to 5'-direction to yield nucleoside 5'-phosphates.. Its function is as follows. Bidirectionally degrades single-stranded DNA into large acid-insoluble oligonucleotides, which are then degraded further into small acid-soluble oligonucleotides. This is Exodeoxyribonuclease 7 large subunit from Carboxydothermus hydrogenoformans (strain ATCC BAA-161 / DSM 6008 / Z-2901).